Reading from the N-terminus, the 284-residue chain is uncharacterized protein (284 aa).

One can recognise a Photolyase/cryptochrome alpha/beta domain in the interval 4–133 (PLHLFWHRRD…AVHRQWDQLL (130 aa)).

This is an uncharacterized protein from Synechococcus sp. (strain PCC 6716).